Reading from the N-terminus, the 753-residue chain is Catalase-peroxidase (753 aa).

The N-terminal stretch at 1–39 (MLPRVNKRSNCIAKKTSNRLISAVSLAIASLCISQSALA) is a signal peptide. Residues 118–241 (WHSTGTYRMS…LAAVQMGLIY (124 aa)) constitute a cross-link (tryptophyl-tyrosyl-methioninium (Trp-Tyr) (with M-267)). Residue His119 is the Proton acceptor of the active site. The segment at residues 241–267 (YVNPEGPNGNHDPISAAADIRDVFARM) is a cross-link (tryptophyl-tyrosyl-methioninium (Tyr-Met) (with W-118)). Residue His282 participates in heme b binding.

The protein belongs to the peroxidase family. Peroxidase/catalase subfamily. In terms of assembly, homodimer or homotetramer. Heme b is required as a cofactor. Formation of the three residue Trp-Tyr-Met cross-link is important for the catalase, but not the peroxidase activity of the enzyme.

The catalysed reaction is H2O2 + AH2 = A + 2 H2O. It catalyses the reaction 2 H2O2 = O2 + 2 H2O. Its function is as follows. Bifunctional enzyme with both catalase and broad-spectrum peroxidase activity. This Pseudoalteromonas atlantica (strain T6c / ATCC BAA-1087) protein is Catalase-peroxidase.